A 479-amino-acid chain; its full sequence is Cysteine--tRNA ligase (479 aa).

Position 28 (cysteine 28) interacts with Zn(2+). The 'HIGH' region motif lies at 30–40 (PTVYDHAHLGH). Zn(2+) is bound by residues cysteine 207, histidine 232, and glutamate 236. Positions 264–268 (KMSKS) match the 'KMSKS' region motif. ATP is bound at residue lysine 267.

It belongs to the class-I aminoacyl-tRNA synthetase family. Zn(2+) serves as cofactor.

It is found in the cytoplasm. It carries out the reaction tRNA(Cys) + L-cysteine + ATP = L-cysteinyl-tRNA(Cys) + AMP + diphosphate. This Methanococcus aeolicus (strain ATCC BAA-1280 / DSM 17508 / OCM 812 / Nankai-3) protein is Cysteine--tRNA ligase.